The chain runs to 100 residues: Tachykinin-4 (100 aa).

The signal sequence occupies residues 1 to 19; that stretch reads MPSSVTLLLLMGLSVCTSA. 2 consecutive propeptides follow at residues 20–55 and 85–100; these read EDGGEEQTLGAEAGPWVTVTLEAGAVASIQLQLQEV and RASSTKGSVDEDQGAE. The interval 80 to 100 is disordered; it reads GLLGRRASSTKGSVDEDQGAE.

This sequence belongs to the tachykinin family.

The protein resides in the secreted. Tachykinins are active peptides which excite neurons, evoke behavioral responses, are potent vasodilators and secretagogues, and contract (directly or indirectly) many smooth muscles. The sequence is that of Tachykinin-4 from Oryctolagus cuniculus (Rabbit).